The following is a 119-amino-acid chain: NADH-quinone oxidoreductase subunit A (119 aa).

Transmembrane regions (helical) follow at residues 9 to 29 (IFLFILVGIGVGVAPQVLGYI), 63 to 83 (LVAILFILFDLEIAFLFPWAV), and 88 to 108 (IGALGFWSVMVFLTILVVGFI).

Belongs to the complex I subunit 3 family. In terms of assembly, NDH-1 is composed of 14 different subunits. Subunits NuoA, H, J, K, L, M, N constitute the membrane sector of the complex.

It localises to the cell inner membrane. It catalyses the reaction a quinone + NADH + 5 H(+)(in) = a quinol + NAD(+) + 4 H(+)(out). In terms of biological role, NDH-1 shuttles electrons from NADH, via FMN and iron-sulfur (Fe-S) centers, to quinones in the respiratory chain. The immediate electron acceptor for the enzyme in this species is believed to be ubiquinone. Couples the redox reaction to proton translocation (for every two electrons transferred, four hydrogen ions are translocated across the cytoplasmic membrane), and thus conserves the redox energy in a proton gradient. This is NADH-quinone oxidoreductase subunit A from Albidiferax ferrireducens (strain ATCC BAA-621 / DSM 15236 / T118) (Rhodoferax ferrireducens).